Consider the following 465-residue polypeptide: Soluble pyridine nucleotide transhydrogenase (465 aa).

Position 35–44 (35–44) interacts with FAD; the sequence is ERYNNVGGGC.

The protein belongs to the class-I pyridine nucleotide-disulfide oxidoreductase family. FAD is required as a cofactor.

The protein resides in the cytoplasm. The catalysed reaction is NAD(+) + NADPH = NADH + NADP(+). Functionally, conversion of NADPH, generated by peripheral catabolic pathways, to NADH, which can enter the respiratory chain for energy generation. This is Soluble pyridine nucleotide transhydrogenase from Photorhabdus laumondii subsp. laumondii (strain DSM 15139 / CIP 105565 / TT01) (Photorhabdus luminescens subsp. laumondii).